Here is a 464-residue protein sequence, read N- to C-terminus: tRNA modification GTPase MnmE (464 aa).

Residues R25, E87, and K130 each coordinate (6S)-5-formyl-5,6,7,8-tetrahydrofolate. The 161-residue stretch at G226–G386 folds into the TrmE-type G domain. Residue N236 coordinates K(+). GTP-binding positions include N236–S241, T255–T261, and D280–G283. Mg(2+) is bound at residue S240. Positions 255, 257, and 260 each coordinate K(+). Mg(2+) is bound at residue T261. K464 serves as a coordination point for (6S)-5-formyl-5,6,7,8-tetrahydrofolate.

This sequence belongs to the TRAFAC class TrmE-Era-EngA-EngB-Septin-like GTPase superfamily. TrmE GTPase family. In terms of assembly, homodimer. Heterotetramer of two MnmE and two MnmG subunits. K(+) serves as cofactor.

The protein localises to the cytoplasm. Exhibits a very high intrinsic GTPase hydrolysis rate. Involved in the addition of a carboxymethylaminomethyl (cmnm) group at the wobble position (U34) of certain tRNAs, forming tRNA-cmnm(5)s(2)U34. This Paraburkholderia xenovorans (strain LB400) protein is tRNA modification GTPase MnmE.